The chain runs to 189 residues: Nucleoside diphosphate kinase 6 (189 aa).

The ATP site is built by Lys-19, Phe-68, Arg-96, Thr-102, Arg-116, and Asn-126. His-129 functions as the Pros-phosphohistidine intermediate in the catalytic mechanism.

The protein belongs to the NDK family. Requires Mg(2+) as cofactor.

It catalyses the reaction a 2'-deoxyribonucleoside 5'-diphosphate + ATP = a 2'-deoxyribonucleoside 5'-triphosphate + ADP. It carries out the reaction a ribonucleoside 5'-diphosphate + ATP = a ribonucleoside 5'-triphosphate + ADP. Functionally, major role in the synthesis of nucleoside triphosphates other than ATP. The ATP gamma phosphate is transferred to the NDP beta phosphate via a ping-pong mechanism, using a phosphorylated active-site intermediate. The sequence is that of Nucleoside diphosphate kinase 6 (Nme6) from Mus musculus (Mouse).